A 234-amino-acid chain; its full sequence is MSSGVAARRDAKKLVRSPSGLRMVPEHRAFGSPFGLEEPQWVPDKECPRCMQCDAKFDFITRKHHCRRCGKCFCDRCCSQKVPLRRMCFVDPVRQCADCALVSHREAEFYDKQLKVLLSGATFLVTFGDSEKPETMVCRLSNNQRCLVLDGDSHREIEIAHVCTVQILTEGFTPGAGSTRATGMLLQYTVPGAEAAAQLRLMAGEDASGSKRQAAAWLAAMHKATKLLYESRDQ.

An FYVE-type zinc finger spans residues 44 to 104 (DKECPRCMQC…QCADCALVSH (61 aa)). C50, C53, C66, C69, C74, C77, C96, and C99 together coordinate Zn(2+). The PH-like stretch occupies residues 107 to 234 (AEFYDKQLKV…TKLLYESRDQ (128 aa)).

As to quaternary structure, interacts with PTK2/FAK1. As to expression, widely expressed.

Its subcellular location is the cell junction. The protein resides in the focal adhesion. It is found in the cytoplasmic vesicle. The protein localises to the endosome. Plays a role in cell adhesion, and thereby in cell motility which requires repeated formation and disassembly of focal adhesions. Regulates microtubule-induced PTK2/FAK1 dephosphorylation, an event important for focal adhesion disassembly, as well as integrin beta-1/ITGB1 cell surface expression. This chain is Zinc finger FYVE domain-containing protein 21 (Zfyve21), found in Mus musculus (Mouse).